Reading from the N-terminus, the 369-residue chain is Putative 2-aminoethylphosphonate import ATP-binding protein PhnT (369 aa).

The region spanning 19–250 (IVLDSLRVAY…PPNRFAAEFL (232 aa)) is the ABC transporter domain. 51 to 58 (GPSGSGKT) lines the ATP pocket.

Belongs to the ABC transporter superfamily. 2-aminoethylphosphonate importer (TC 3.A.1.11.5) family.

Its subcellular location is the cell inner membrane. Probably part of the PhnSTUV complex (TC 3.A.1.11.5) involved in 2-aminoethylphosphonate import. Probably responsible for energy coupling to the transport system. The protein is Putative 2-aminoethylphosphonate import ATP-binding protein PhnT (phnT) of Salmonella typhimurium (strain LT2 / SGSC1412 / ATCC 700720).